Here is a 157-residue protein sequence, read N- to C-terminus: Phosphopantetheine adenylyltransferase (157 aa).

Serine 9 provides a ligand contact to substrate. Residues 9–10 (SF) and histidine 17 each bind ATP. Substrate-binding residues include lysine 41, valine 73, and lysine 87. ATP contacts are provided by residues 88–90 (GLR), glutamate 98, and 122–128 (YSFVSSS).

This sequence belongs to the bacterial CoaD family. In terms of assembly, homohexamer. Requires Mg(2+) as cofactor.

The protein localises to the cytoplasm. The catalysed reaction is (R)-4'-phosphopantetheine + ATP + H(+) = 3'-dephospho-CoA + diphosphate. It participates in cofactor biosynthesis; coenzyme A biosynthesis; CoA from (R)-pantothenate: step 4/5. Functionally, reversibly transfers an adenylyl group from ATP to 4'-phosphopantetheine, yielding dephospho-CoA (dPCoA) and pyrophosphate. This is Phosphopantetheine adenylyltransferase from Mycobacterium marinum (strain ATCC BAA-535 / M).